Consider the following 224-residue polypeptide: uncharacterized protein (224 aa).

3 N-linked (GlcNAc...) asparagine glycosylation sites follow: asparagine 10, asparagine 70, and asparagine 74.

It localises to the endoplasmic reticulum. This is an uncharacterized protein from Saccharomyces cerevisiae (strain ATCC 204508 / S288c) (Baker's yeast).